The chain runs to 213 residues: Kynurenine formamidase (213 aa).

Position 18 (W18) interacts with substrate. Positions 48, 52, and 54 each coordinate Zn(2+). H58 acts as the Proton donor/acceptor in catalysis. H160 and E172 together coordinate Zn(2+).

Belongs to the Cyclase 1 superfamily. KynB family. In terms of assembly, homodimer. Zn(2+) serves as cofactor.

The enzyme catalyses N-formyl-L-kynurenine + H2O = L-kynurenine + formate + H(+). Its pathway is amino-acid degradation; L-tryptophan degradation via kynurenine pathway; L-kynurenine from L-tryptophan: step 2/2. Functionally, catalyzes the hydrolysis of N-formyl-L-kynurenine to L-kynurenine, the second step in the kynurenine pathway of tryptophan degradation. This chain is Kynurenine formamidase, found in Burkholderia pseudomallei (strain 668).